Here is a 262-residue protein sequence, read N- to C-terminus: ATP synthase subunit delta (262 aa).

It belongs to the ATPase delta chain family. As to quaternary structure, F-type ATPases have 2 components, F(1) - the catalytic core - and F(0) - the membrane proton channel. F(1) has five subunits: alpha(3), beta(3), gamma(1), delta(1), epsilon(1). F(0) has three main subunits: a(1), b(2) and c(10-14). The alpha and beta chains form an alternating ring which encloses part of the gamma chain. F(1) is attached to F(0) by a central stalk formed by the gamma and epsilon chains, while a peripheral stalk is formed by the delta and b chains.

It localises to the cell membrane. In terms of biological role, f(1)F(0) ATP synthase produces ATP from ADP in the presence of a proton or sodium gradient. F-type ATPases consist of two structural domains, F(1) containing the extramembraneous catalytic core and F(0) containing the membrane proton channel, linked together by a central stalk and a peripheral stalk. During catalysis, ATP synthesis in the catalytic domain of F(1) is coupled via a rotary mechanism of the central stalk subunits to proton translocation. Functionally, this protein is part of the stalk that links CF(0) to CF(1). It either transmits conformational changes from CF(0) to CF(1) or is implicated in proton conduction. The protein is ATP synthase subunit delta of Tropheryma whipplei (strain TW08/27) (Whipple's bacillus).